A 317-amino-acid polypeptide reads, in one-letter code: MSNEENIKSDNKSGDSSDLPTIPALDIGAEECDLLAELKNLTLKRPFDVKKLSPKVTKRVLFLKDIQVTHDELEEKFLAEKSALEATYDNLYKPLFAKRYEIVNGVVEAEAEKEGVPNFWLIAMKTNEMLANEITERDEAALKYLKDIRSCRVEDTSRNFKLEFLFDSNLYFKNSVLSKTYHVNDEDGPVLEKVIGTDIEWFPGKCLTHKVVVKKKTKKGPKKVNNIPMTKTENCESFFNFFKPPEIPEIDEVDDYDDFDTIMTEELQNLMDQDYDIAVTIRDKLIPHAVSWFTGEALVDEDDSDDNDDDDNDEKSD.

The short motif at 52–67 (LSPKVTKRVLFLKDIQ) is the Nuclear export signal element. A Nuclear localization signal motif is present at residues 214 to 219 (KKKTKK). The tract at residues 297-317 (ALVDEDDSDDNDDDDNDEKSD) is disordered. The span at 298–317 (LVDEDDSDDNDDDDNDEKSD) shows a compositional bias: acidic residues.

This sequence belongs to the nucleosome assembly protein (NAP) family. In terms of assembly, can form homomeric and heteromeric protein complexes with NAP1;1, NAP1;2 and NAP1;3. Binds histone H2A. In terms of tissue distribution, expressed in the root segment covering the apical end of the differentiation zone, the elongation zone of the root and the mature pollen within the anthers of open flowers.

The protein localises to the nucleus. It is found in the cytoplasm. Functionally, may modulate chromatin structure by regulation of nucleosome assembly/disassembly. The sequence is that of Nucleosome assembly protein 1;4 (NAP1;4) from Arabidopsis thaliana (Mouse-ear cress).